A 388-amino-acid polypeptide reads, in one-letter code: Salivary protein Tsal2A (388 aa).

A signal peptide spans 1–18 (MSLLYGLLILAFTRSCLV). The N-linked (GlcNAc...) asparagine glycan is linked to N260.

The protein belongs to the DNA/RNA non-specific endonuclease family. The cofactor is a divalent metal cation. As to expression, saliva (at protein level).

It is found in the secreted. Binds double-stranded DNA (dsDNA) with high affinity. Binds double-stranded RNA. Binds single-stranded DNA with lower affinity and with a preference for purine-rich sequences. Shows residual nuclease activity for dsDNA. Facilitates blood meal intake by lowering the local viscosity created by the release of host DNA. The chain is Salivary protein Tsal2A from Glossina morsitans morsitans (Savannah tsetse fly).